The chain runs to 218 residues: Glutathione S-transferase Mu 1 (218 aa).

In terms of domain architecture, GST N-terminal spans 2–88 (PMILGYWDIR…YIARKHNLCG (87 aa)). Glutathione-binding positions include 7 to 8 (YW), 43 to 46 (RSQW), Lys50, 59 to 60 (NL), and 72 to 73 (QS). Residues 90-208 (TEEEMIRVDI…KSSRFLPGPL (119 aa)) enclose the GST C-terminal domain. A substrate-binding site is contributed by Tyr116.

This sequence belongs to the GST superfamily. Mu family. In terms of assembly, homodimer.

It is found in the cytoplasm. The enzyme catalyses RX + glutathione = an S-substituted glutathione + a halide anion + H(+). It carries out the reaction prostaglandin A2 + glutathione = prostaglandin A2-S-(R)-glutathione. It catalyses the reaction prostaglandin J2 + glutathione = prostaglandin J2-S-(R)-glutathione. The catalysed reaction is prostaglandin J2 + glutathione = prostaglandin J2-S-(S)-glutathione. The enzyme catalyses prostaglandin A2 + glutathione = prostaglandin A2-S-(S)-glutathione. It carries out the reaction 11(S)-hydroxy-14(S),15(S)-epoxy-(5Z,8Z,12E)-eicosatrienoate + glutathione = (11S,15S)-dihydroxy-14(R)-S-glutathionyl-(5Z,8Z,12E)-eicosatrienoate. Its function is as follows. Conjugation of reduced glutathione to a wide number of exogenous and endogenous hydrophobic electrophiles. Protects against the thiol-mediated metal-catalyzed oxidative inactivation of enzymes. Involved in the formation of glutathione conjugates of both prostaglandin A2 (PGA2) and prostaglandin J2 (PGJ2). Participates in the formation of novel hepoxilin regioisomers. The chain is Glutathione S-transferase Mu 1 (GSTM1) from Bos taurus (Bovine).